A 68-amino-acid polypeptide reads, in one-letter code: ATP synthase protein 8 (68 aa).

A helical membrane pass occupies residues 8–24 (TWLTIITPTLLALFLIT). The residue at position 54 (Lys-54) is an N6-acetyllysine; alternate. An N6-succinyllysine; alternate modification is found at Lys-54. An N6-acetyllysine modification is found at Lys-57.

Belongs to the ATPase protein 8 family. As to quaternary structure, F-type ATPases have 2 components, CF(1) - the catalytic core - and CF(0) - the membrane proton channel. Component of an ATP synthase complex composed of ATP5PB, ATP5MC1, ATP5F1E, ATP5PD, ATP5ME, ATP5PF, ATP5MF, MT-ATP6, MT-ATP8, ATP5F1A, ATP5F1B, ATP5F1D, ATP5F1C, ATP5PO, ATP5MG, ATP5MK and ATP5MJ. Interacts with PRICKLE3.

It is found in the mitochondrion membrane. Functionally, mitochondrial membrane ATP synthase (F(1)F(0) ATP synthase or Complex V) produces ATP from ADP in the presence of a proton gradient across the membrane which is generated by electron transport complexes of the respiratory chain. F-type ATPases consist of two structural domains, F(1) - containing the extramembraneous catalytic core and F(0) - containing the membrane proton channel, linked together by a central stalk and a peripheral stalk. During catalysis, ATP synthesis in the catalytic domain of F(1) is coupled via a rotary mechanism of the central stalk subunits to proton translocation. Part of the complex F(0) domain. Minor subunit located with subunit a in the membrane. The chain is ATP synthase protein 8 (MT-ATP8) from Pongo pygmaeus (Bornean orangutan).